The chain runs to 180 residues: Transcription factor IBH1-like 1 (180 aa).

Positions 110 to 160 (KSKSASEEAAAKAKRLVKRRTQGLRNVVPGGELMSNDVLLLQETLDYIVSL) constitute a bHLH domain.

It belongs to the bHLH protein family.

Its subcellular location is the nucleus. Functionally, functions redundandly with IBH1/BHLH158 in a regulation node known as the incoherent feed-forward loop (FFL). Acts as transcriptional repressor that negatively regulates cell and organ elongation in response to gibberellin (GA) and brassinosteroid (BR) signaling. This Arabidopsis thaliana (Mouse-ear cress) protein is Transcription factor IBH1-like 1.